The following is a 380-amino-acid chain: Alanine racemase (380 aa).

Lys-39 functions as the Proton acceptor; specific for D-alanine in the catalytic mechanism. At Lys-39 the chain carries N6-(pyridoxal phosphate)lysine. Arg-137 lines the substrate pocket. Tyr-263 (proton acceptor; specific for L-alanine) is an active-site residue. Met-310 is a binding site for substrate.

This sequence belongs to the alanine racemase family. The cofactor is pyridoxal 5'-phosphate.

It carries out the reaction L-alanine = D-alanine. Its pathway is amino-acid biosynthesis; D-alanine biosynthesis; D-alanine from L-alanine: step 1/1. Functionally, catalyzes the interconversion of L-alanine and D-alanine. May also act on other amino acids. The polypeptide is Alanine racemase (alr) (Macrococcus caseolyticus (strain JCSC5402) (Macrococcoides caseolyticum)).